The sequence spans 483 residues: SET domain and MYND-type zinc finger protein 6 (483 aa).

Residues 4–228 form the SET domain; that stretch reads PLIASVILPE…KDEQLFISYI (225 aa). Zn(2+) contacts are provided by Cys49, Cys52, Cys62, Cys65, Cys71, Cys75, His83, and Cys87. An MYND-type zinc finger spans residues 49 to 87; it reads CSTCTEEKVKTQRCAACKIIHYCSKGCQKADWPFHKLEC.

The protein belongs to the class V-like SAM-binding methyltransferase superfamily.

It is found in the cytoplasm. Its subcellular location is the nucleus. This chain is SET domain and MYND-type zinc finger protein 6 (set6), found in Schizosaccharomyces pombe (strain 972 / ATCC 24843) (Fission yeast).